Reading from the N-terminus, the 388-residue chain is T-cell surface glycoprotein CD1e, membrane-associated (388 aa).

The N-terminal stretch at 1-19 (MLLLFLLFEGLCCPGENTA) is a signal peptide. A propeptide spans 20 to 31 (APQALQSYHLAA) (removed in sCD1e). Asn-47 and Asn-84 each carry an N-linked (GlcNAc...) asparagine glycan. Positions 191–301 (PRFLAGLMEA…LGGHDLIIHW (111 aa)) constitute an Ig-like domain. A disulfide bond links Cys-230 and Cys-285. The chain crosses the membrane as a helical span at residues 305-325 (SIFLILICLTVIVTLVILVVV).

As to quaternary structure, heterodimer with B2M (beta-2-microglobulin). The association with B2M appears to be facilitated by the presence of the propeptide. Post-translationally, mono-ubiquitinated. Proteolytically cleaved in late endosomes to yield a soluble form. Expressed on cortical thymocytes, dendritic cells, Langerhans cells, on certain T-cell leukemias, and in various other tissues.

It is found in the golgi apparatus membrane. The protein localises to the early endosome. The protein resides in the late endosome. It localises to the lysosome lumen. Its function is as follows. T-cell surface glycoprotein CD1e, soluble binds diacetylated lipids, including phosphatidyl inositides and diacylated sulfoglycolipids, and is required for the presentation of glycolipid antigens on the cell surface. The membrane-associated form is not active. This is T-cell surface glycoprotein CD1e, membrane-associated (CD1E) from Homo sapiens (Human).